Reading from the N-terminus, the 653-residue chain is Sodium-dependent phosphate transporter 2 (653 aa).

A topological domain (extracellular) is located at residue M1. Residues 2–22 (VLVEYLWMVIVGFIIAFILAF) form a helical membrane-spanning segment. The Cytoplasmic segment spans residues 23–46 (SVGANDVANSFGTAVGSGVVTLRQ). A helical transmembrane segment spans residues 47-67 (ACILASIFETTGSVLLGAKVG). The Extracellular portion of the chain corresponds to 68–86 (ETIRKGIIDVNLYNNTVDL). An N-linked (GlcNAc...) asparagine glycan is attached at N81. A helical membrane pass occupies residues 87–107 (LMAGEVSAMVGSAVWQLIASF). Topologically, residues 108 to 109 (LR) are cytoplasmic. A helical membrane pass occupies residues 110 to 130 (LPISGTHCIVGATIGFSLVAI). Over 131-142 (GTHGVQWMQLVK) the chain is Extracellular. Residues 143–163 (IVASWFISPLLSGLMSGALFL) traverse the membrane as a helical segment. Topologically, residues 164-187 (MIKFFILKKEDPVPNGLKALPVFY) are cytoplasmic. A helical membrane pass occupies residues 188–208 (AATIGINVFSILYTGAPLLGL). Residues 209–217 (ESFPVWATA) are Extracellular-facing. Residues 218–238 (LLSIGIAIIFALIVWFFVCPW) traverse the membrane as a helical segment. The Cytoplasmic portion of the chain corresponds to 239-483 (MKKKIASRLK…EDKEEKDKSE (245 aa)). A helical membrane pass occupies residues 484 to 504 (VHLLFHFLQILTACFGSFAHG). The Extracellular segment spans residues 505–532 (GNDVSNAIGPLVALWLIYEQGGVMQEAS). A helical transmembrane segment spans residues 533–553 (TPVWLLLYGGVGICAGLWVWG). Residues 554 to 572 (RRVIQTMGKDLTPITPSSG) lie on the Cytoplasmic side of the membrane. The chain crosses the membrane as a helical span at residues 573–587 (FTIELASAFTVVVAS). At 588–594 (NIGLPIS) the chain is on the extracellular side. Residues 595–610 (TTHCKVGSVVAVGWIR) traverse the membrane as a helical segment. At 611–622 (SRKAVDWRLFRN) the chain is on the cytoplasmic side. A helical transmembrane segment spans residues 623–643 (IFLAWFVTVPVAGLFSAGVMA). Residues 644-653 (ILQYGILPYV) lie on the Extracellular side of the membrane.

It belongs to the inorganic phosphate transporter (PiT) (TC 2.A.20) family. Homodimer.

It localises to the cell membrane. Its subcellular location is the apical cell membrane. It catalyses the reaction 2 Na(+)(out) + phosphate(out) = 2 Na(+)(in) + phosphate(in). In terms of biological role, sodium-phosphate symporter which preferentially transports the monovalent form of phosphate with a stoichiometry of two sodium ions per phosphate ion. The protein is Sodium-dependent phosphate transporter 2 (slc20a2) of Xenopus tropicalis (Western clawed frog).